The sequence spans 92 residues: Non-specific lipid-transfer protein B (92 aa).

Cystine bridges form between Cys-3/Cys-51, Cys-13/Cys-28, Cys-29/Cys-74, and Cys-49/Cys-88.

The protein belongs to the plant LTP family.

Plant non-specific lipid-transfer proteins transfer phospholipids as well as galactolipids across membranes. May play a role in wax or cutin deposition in the cell walls of expanding epidermal cells and certain secretory tissues. This is Non-specific lipid-transfer protein B from Ricinus communis (Castor bean).